Consider the following 92-residue polypeptide: Islet amyloid polypeptide (92 aa).

Residues 1-22 (MCLLRLPVTLLVLCVALNELKA) form the signal peptide. Positions 23–34 (TSIASDTGHQVG) are excised as a propeptide. Cysteine 38 and cysteine 43 are joined by a disulfide. Tyrosine 73 carries the tyrosine amide modification. A propeptide spanning residues 77 to 92 (NAPQISDRELLHYLPL) is cleaved from the precursor.

It belongs to the calcitonin family. In terms of assembly, can form homodimers. Interacts with IDE and INS. Interaction with INS inhibits homodimerization and fibril formation.

It localises to the secreted. Amylin/IAPP is a glucoregulatory peptide hormone that plays an important role in the regulation of energy homeostasis. Selectively inhibits insulin-stimulated glucose utilization and glycogen deposition in muscle, while not affecting adipocyte glucose metabolism. IAPP function is mediated by the CALCR-RAMPs (AMYRs) receptor complexes. Amylin can also bind CALCR receptor in the absence of RAMPs, although it is more selective for AMYRs. In Cavia porcellus (Guinea pig), this protein is Islet amyloid polypeptide (IAPP).